Reading from the N-terminus, the 478-residue chain is GDP-fucose protein O-fucosyltransferase 3 (478 aa).

The Cytoplasmic segment spans residues 1–8; it reads MVWIQRRR. A helical; Signal-anchor for type II membrane protein transmembrane segment spans residues 9 to 31; that stretch reads LLASCLCITATVFLLVTLQVVVE. Over 32-478 the chain is Lumenal; that stretch reads LGKFERKKFK…QEFWALVFKD (447 aa). N-linked (GlcNAc...) asparagine glycosylation is found at N110 and N168. A disulfide bond links C389 and C392.

This sequence belongs to the glycosyltransferase 10 family.

Its subcellular location is the endoplasmic reticulum membrane. It catalyses the reaction L-threonyl-[protein] + GDP-beta-L-fucose = 3-O-(alpha-L-fucosyl)-L-threonyl-[protein] + GDP + H(+). The enzyme catalyses L-seryl-[protein] + GDP-beta-L-fucose = 3-O-(alpha-L-fucosyl)-L-seryl-[protein] + GDP + H(+). The protein operates within protein modification; protein glycosylation. Protein O-fucosyltransferase that specifically catalyzes O-fucosylation of serine or threonine residues in EMI domains of target proteins, such as MMRN1, MMRN2 and EMID1. Attaches fucose through an O-glycosidic linkage. O-fucosylation of EMI domain-containing proteins may be required for facilitating protein folding and secretion. May also show alpha-(1,3)-fucosyltransferase activity toward the innermost N-acetyl glucosamine (GlcNAc) residue in biantennary N-glycan acceptors. However, this was tested with a library of synthetic substrates and this activity is unsure in vivo. May be involved in biosynthesis of Lewis X-carrying biantennary N-glycans that regulate neuron stem cell self-renewal during brain development. In Canis lupus familiaris (Dog), this protein is GDP-fucose protein O-fucosyltransferase 3 (FUT10).